The sequence spans 396 residues: DNA polymerase IV (396 aa).

A UmuC domain is found at 5 to 192; it reads IFHVDVNSAF…LPVGELFMVG (188 aa). 2 residues coordinate Mg(2+): D9 and D111. E112 is a catalytic residue.

It belongs to the DNA polymerase type-Y family. As to quaternary structure, monomer. The cofactor is Mg(2+).

Its subcellular location is the cytoplasm. The enzyme catalyses DNA(n) + a 2'-deoxyribonucleoside 5'-triphosphate = DNA(n+1) + diphosphate. Poorly processive, error-prone DNA polymerase involved in untargeted mutagenesis. Copies undamaged DNA at stalled replication forks, which arise in vivo from mismatched or misaligned primer ends. These misaligned primers can be extended by PolIV. Exhibits no 3'-5' exonuclease (proofreading) activity. May be involved in translesional synthesis, in conjunction with the beta clamp from PolIII. The sequence is that of DNA polymerase IV from Clostridium acetobutylicum (strain ATCC 824 / DSM 792 / JCM 1419 / IAM 19013 / LMG 5710 / NBRC 13948 / NRRL B-527 / VKM B-1787 / 2291 / W).